Reading from the N-terminus, the 193-residue chain is Cerebellin-1 (193 aa).

The signal sequence occupies residues 1 to 21 (MLGVVELLLLGAAWLAGPARG). Asn23 carries N-linked (GlcNAc...) asparagine glycosylation. The essential for interaction with NRXN1 and linker of two C1q trimers into disulfide-linked hexamers stretch occupies residues 34–38 (CLVVC). Residues 57–193 (SGSAKVAFSA…TFSGFLVFPL (137 aa)) form the C1q domain. The segment at 62–193 (VAFSAIRSTN…TFSGFLVFPL (132 aa)) is necessary for interaction with CBLN3, and homotrimerization. N-linked (GlcNAc...) asparagine glycosylation occurs at Asn79. Residues 122 to 147 (YNRQTIQVSLMLNGWPVISAFAGDQD) are essential for interaction with GRID2.

Homohexamer; disulfide-linked homotrimers. The trimers are assembled via the globular C1q domains. The trimers associate via N-terminal cysteine residues to form disulfide-linked hexamers. May form oligomers with CBLN2, CBLN3 and CBLN4 prior to secretion. Once secreted, does not interact with other CBLN family members. Interacts with GRID1. Interacts with NRXN1 and NRXN2 long (alpha) and short (beta) isoforms produced by alternative promoter usage. Competes with NLGN1 for NRXN1-binding. Weakly interacts with NRXN3 short isoform and not at all with NRXN3 long isoform. Interacts (via C1q domain) with GRID2; GRID2-binding is calcium-independent; CBLN1 hexamers anchor GRID2 N-terminal domain dimers to monomeric NRXN1 isoform beta; promotes synaptogenesis and mediates the D-Serine-dependent long term depression signals and AMPA receptor endocytosis. Post-translationally, the proteolytic processing to yield cerebellin seems to occur either prior to the secretion by presynaptic neurons and subsequent oligomerization or in some other location after release of the mature protein. Sialoglycoprotein.

It localises to the secreted. Its subcellular location is the postsynaptic cell membrane. Its function is as follows. Required for synapse integrity and synaptic plasticity. During cerebellar synapse formation, essential for the matching and maintenance of pre- and post-synaptic elements at parallel fiber-Purkinje cell synapses, the establishment of the proper pattern of climbing fiber-Purkinje cell innervation, and induction of long-term depression at parallel fiber-Purkinje cell synapses. Plays a role as a synaptic organizer that acts bidirectionally on both pre- and post-synaptic components. On the one hand induces accumulation of synaptic vesicles in the pre-synaptic part by binding with NRXN1 and in other hand induces clustering of GRID2 and its associated proteins at the post-synaptic site through association of GRID2. NRXN1-CBLN1-GRID2 complex directly induces parallel fiber protrusions that encapsulate spines of Purkinje cells leading to accumulation of GRID2 and synaptic vesicles. Required for CBLN3 export from the endoplasmic reticulum and secretion. NRXN1-CBLN1-GRID2 complex mediates the D-Serine-dependent long term depression signals and AMPA receptor endocytosis. Essential for long-term maintenance but not establishment of excitatory synapses. Inhibits the formation and function of inhibitory GABAergic synapses in cerebellar Purkinje cells. Functionally, the cerebellin peptide exerts neuromodulatory functions. Directly stimulates norepinephrine release via the adenylate cyclase/PKA-dependent signaling pathway; and indirectly enhances adrenocortical secretion in vivo, through a paracrine mechanism involving medullary catecholamine release. This is Cerebellin-1 from Bos taurus (Bovine).